Consider the following 485-residue polypeptide: Probable aspartic-type endopeptidase opsB (485 aa).

A signal peptide spans 1 to 20 (MRHIFSLLSIVCLMVKHGAC). The Peptidase A1 domain occupies 69–397 (YFCNVTLGTP…DIANNEISIA (329 aa)). Residue Asn-72 is glycosylated (N-linked (GlcNAc...) asparagine). Asp-87 is a catalytic residue. N-linked (GlcNAc...) asparagine glycans are attached at residues Asn-99, Asn-107, Asn-111, and Asn-132. Residue Asp-285 is part of the active site. Residues Asn-328, Asn-337, and Asn-402 are each glycosylated (N-linked (GlcNAc...) asparagine). Ser-461 is lipidated: GPI-anchor amidated serine. The propeptide at 462–485 (AGVARADKQYLAIALIAVWFVLGL) is removed in mature form.

It belongs to the peptidase A1 family.

Its subcellular location is the cell membrane. In terms of biological role, probable GPI-anchored aspartic-type endopeptidase which contributes to virulence. This is Probable aspartic-type endopeptidase opsB (opsB) from Aspergillus fumigatus (strain ATCC MYA-4609 / CBS 101355 / FGSC A1100 / Af293) (Neosartorya fumigata).